Consider the following 316-residue polypeptide: Aspartate carbamoyltransferase catalytic subunit (316 aa).

Carbamoyl phosphate is bound by residues Arg58 and Thr59. Residue Lys86 coordinates L-aspartate. Carbamoyl phosphate contacts are provided by Arg108, His136, and Gln139. L-aspartate is bound by residues Arg169 and Arg223. Residues Gly264 and Pro265 each contribute to the carbamoyl phosphate site.

Belongs to the aspartate/ornithine carbamoyltransferase superfamily. ATCase family. Heterododecamer (2C3:3R2) of six catalytic PyrB chains organized as two trimers (C3), and six regulatory PyrI chains organized as three dimers (R2).

The catalysed reaction is carbamoyl phosphate + L-aspartate = N-carbamoyl-L-aspartate + phosphate + H(+). The protein operates within pyrimidine metabolism; UMP biosynthesis via de novo pathway; (S)-dihydroorotate from bicarbonate: step 2/3. Its function is as follows. Catalyzes the condensation of carbamoyl phosphate and aspartate to form carbamoyl aspartate and inorganic phosphate, the committed step in the de novo pyrimidine nucleotide biosynthesis pathway. The chain is Aspartate carbamoyltransferase catalytic subunit from Dinoroseobacter shibae (strain DSM 16493 / NCIMB 14021 / DFL 12).